Consider the following 633-residue polypeptide: ABC transporter G family member 1 (633 aa).

The 243-residue stretch at 23 to 265 (LTWEDLWVTA…FALSGFPCPT (243 aa)) folds into the ABC transporter domain. An ATP-binding site is contributed by 60-67 (GPSGSGKS). The region spanning 340 to 552 (TQSLVLTRRS…AYEGMFKNEF (213 aa)) is the ABC transmembrane type-2 domain. Asparagine 352 is a glycosylation site (N-linked (GlcNAc...) asparagine). Transmembrane regions (helical) follow at residues 364 to 384 (LAVYVVIAVGLGSLYYDVGFS), 394 to 414 (MLMFVASFITFMAIGGFPSFV), 440 to 460 (LSAMPYLLLVSLIPGAIAYFM), 470 to 490 (FIYFALVLFTCMMIVESLMMI), 498 to 518 (FLMGLIAGAGIQALMLLSGGF), and 580 to 600 (IDLVILLGMLVLYRVLFLLVV).

It belongs to the ABC transporter superfamily. ABCG family. As to quaternary structure, homodimer. Restricted to the petals, with the highest expression in the limb and, to a lesser extent, in petal tubes, probably in both epidermal and mesophyll cell layers.

Its subcellular location is the cell membrane. Its function is as follows. ABC transporter controlling the release of volatile organic compounds (VOCs), including floral volatile benzenoids and phenylpropanoids (FVBP), in flowers of fragrant cultivars (e.g. cv. Mitchell and cv. V26). This scent, mostly produced in the evening and night by the petals, attracts the pollinators (e.g. the night-active hawkmoth pollinator Manduca sexta). This chain is ABC transporter G family member 1, found in Petunia hybrida (Petunia).